The sequence spans 329 residues: GTPase Obg (329 aa).

Positions 1-159 (MQFIDQARIT…WLLHLELKLL (159 aa)) constitute an Obg domain. Positions 160–328 (AEVGIIGLPN…LLNKIWSKLE (169 aa)) constitute an OBG-type G domain. Residues 166-173 (GLPNAGKS), 191-195 (FTTLI), 213-216 (DIPG), 280-283 (NKKE), and 309-311 (SAI) contribute to the ATP site. Residues S173 and T193 each coordinate Mg(2+).

Belongs to the TRAFAC class OBG-HflX-like GTPase superfamily. OBG GTPase family. As to quaternary structure, monomer. Mg(2+) is required as a cofactor.

It is found in the cytoplasm. Functionally, an essential GTPase which binds GTP, GDP and possibly (p)ppGpp with moderate affinity, with high nucleotide exchange rates and a fairly low GTP hydrolysis rate. Plays a role in control of the cell cycle, stress response, ribosome biogenesis and in those bacteria that undergo differentiation, in morphogenesis control. The polypeptide is GTPase Obg (Prochlorococcus marinus (strain SARG / CCMP1375 / SS120)).